Here is a 286-residue protein sequence, read N- to C-terminus: E3 ubiquitin-protein ligase RNF170 (286 aa).

Residues 1-52 (MQRYWRFQDNKIQDICFGVLGESWIQRPVMARYYSEGQSLQQDDSFIEGVSD) are Lumenal-facing. Residues 53-73 (QVLVAVVVSLALTATLLYALL) form a helical membrane-spanning segment. Topologically, residues 74-229 (RNVQQNIHPE…GGLFWMFRIR (156 aa)) are cytoplasmic. Residues 115-158 (CPICLHQASFPVETNCGHLFCGSCIIAYWRYGSWLGAISCPICR) form an RING-type zinc finger. The helical transmembrane segment at 230–250 (IMLCLMGAFFYLISPLDFVPE) threads the bilayer. Residue A251 is a topological domain, lumenal. Residues 252-272 (LFGILGFLDDFFVIFLLLIYI) traverse the membrane as a helical segment. Residues 273–286 (SIMYREVITQRLTR) are Cytoplasmic-facing.

As to quaternary structure, constitutively associated with the ERLIN1/ERLIN 2 complex. Interacts with activated ITPR1.

The protein resides in the endoplasmic reticulum membrane. It catalyses the reaction S-ubiquitinyl-[E2 ubiquitin-conjugating enzyme]-L-cysteine + [acceptor protein]-L-lysine = [E2 ubiquitin-conjugating enzyme]-L-cysteine + N(6)-ubiquitinyl-[acceptor protein]-L-lysine.. Its pathway is protein modification; protein ubiquitination. Its function is as follows. E3 ubiquitin-protein ligase that plays an essential role in stimulus-induced inositol 1,4,5-trisphosphate receptor type 1 (ITPR1) ubiquitination and degradation via the endoplasmic reticulum-associated degradation (ERAD) pathway. Also involved in ITPR1 turnover in resting cells. Selectively inhibits the TLR3-triggered innate immune response by promoting the 'Lys-48'-linked polyubiquitination and degradation of TLR3. The polypeptide is E3 ubiquitin-protein ligase RNF170 (Rnf170) (Mus musculus (Mouse)).